The sequence spans 88 residues: MERSATLEMLNVHKPDARQTGDILSRYANALWPPALAYAASVAAGYVFTAGPHGCRCGKAMTEAARVGVFLGVLCALYNWMGSGDSFA.

2 consecutive transmembrane segments (helical) span residues 30 to 50 and 67 to 87; these read ALWP…VFTA and VGVF…GDSF.

Its subcellular location is the host membrane. In Frog virus 3 (isolate Goorha) (FV-3), this protein is Transmembrane protein 069R.